Here is a 379-residue protein sequence, read N- to C-terminus: Cytochrome b (379 aa).

Helical transmembrane passes span 33 to 53, 77 to 98, 113 to 133, and 178 to 198; these read FGSL…FLAM, WLIR…YLHI, WNIG…GYVL, and FFTF…LHLL. 2 residues coordinate heme b: H83 and H97. Residues H182 and H196 each contribute to the heme b site. H201 is a binding site for a ubiquinone. Transmembrane regions (helical) follow at residues 226–246, 288–308, 320–340, and 347–367; these read YKDL…VLFS, LGGV…PLLH, FSQT…WIGG, and FIII…VVMP.

Belongs to the cytochrome b family. The cytochrome bc1 complex contains 3 respiratory subunits (MT-CYB, CYC1 and UQCRFS1), 2 core proteins (UQCRC1 and UQCRC2) and probably 6 low-molecular weight proteins. The cofactor is heme b.

The protein localises to the mitochondrion inner membrane. Component of the ubiquinol-cytochrome c reductase complex (complex III or cytochrome b-c1 complex) that is part of the mitochondrial respiratory chain. The b-c1 complex mediates electron transfer from ubiquinol to cytochrome c. Contributes to the generation of a proton gradient across the mitochondrial membrane that is then used for ATP synthesis. This Iguana iguana (Common iguana) protein is Cytochrome b (MT-CYB).